The primary structure comprises 150 residues: SsrA-binding protein (150 aa).

The protein belongs to the SmpB family.

It is found in the cytoplasm. Functionally, required for rescue of stalled ribosomes mediated by trans-translation. Binds to transfer-messenger RNA (tmRNA), required for stable association of tmRNA with ribosomes. tmRNA and SmpB together mimic tRNA shape, replacing the anticodon stem-loop with SmpB. tmRNA is encoded by the ssrA gene; the 2 termini fold to resemble tRNA(Ala) and it encodes a 'tag peptide', a short internal open reading frame. During trans-translation Ala-aminoacylated tmRNA acts like a tRNA, entering the A-site of stalled ribosomes, displacing the stalled mRNA. The ribosome then switches to translate the ORF on the tmRNA; the nascent peptide is terminated with the 'tag peptide' encoded by the tmRNA and targeted for degradation. The ribosome is freed to recommence translation, which seems to be the essential function of trans-translation. The chain is SsrA-binding protein from Flavobacterium psychrophilum (strain ATCC 49511 / DSM 21280 / CIP 103535 / JIP02/86).